The sequence spans 214 residues: Probable maleylacetoacetate isomerase (214 aa).

A GST N-terminal domain is found at 4 to 84 (QKPVLYSYWR…YLEETHPDVP (81 aa)). Residues 14–19 (SSCSWR), Val-56, 68–69 (ES), Gln-108, and 112–114 (NLK) each bind glutathione. The GST C-terminal domain occupies 89–212 (DPIKRAHARA…HPDNQPDTGL (124 aa)).

Belongs to the GST superfamily. Zeta family. Glutathione is required as a cofactor.

The protein localises to the cytoplasm. It carries out the reaction 4-maleylacetoacetate = 4-fumarylacetoacetate. The protein operates within amino-acid degradation; L-phenylalanine degradation; acetoacetate and fumarate from L-phenylalanine: step 5/6. This is Probable maleylacetoacetate isomerase (gst-42) from Caenorhabditis elegans.